The primary structure comprises 508 residues: Photosystem II CP47 reaction center protein (508 aa).

6 helical membrane passes run 21-36 (SVHI…WAGS), 101-115 (IAFS…IWHW), 140-156 (GIHL…FGAF), 203-218 (IAAG…FHLS), 237-252 (VLSS…AFVV), and 457-472 (SFAL…HGAR).

Belongs to the PsbB/PsbC family. PsbB subfamily. In terms of assembly, PSII is composed of 1 copy each of membrane proteins PsbA, PsbB, PsbC, PsbD, PsbE, PsbF, PsbH, PsbI, PsbJ, PsbK, PsbL, PsbM, PsbT, PsbX, PsbY, PsbZ, Psb30/Ycf12, at least 3 peripheral proteins of the oxygen-evolving complex and a large number of cofactors. It forms dimeric complexes. Binds multiple chlorophylls. PSII binds additional chlorophylls, carotenoids and specific lipids. serves as cofactor.

It localises to the plastid membrane. Its function is as follows. One of the components of the core complex of photosystem II (PSII). It binds chlorophyll and helps catalyze the primary light-induced photochemical processes of PSII. PSII is a light-driven water:plastoquinone oxidoreductase, using light energy to abstract electrons from H(2)O, generating O(2) and a proton gradient subsequently used for ATP formation. The protein is Photosystem II CP47 reaction center protein of Cuscuta reflexa (Southern Asian dodder).